Here is a 229-residue protein sequence, read N- to C-terminus: 7-cyano-7-deazaguanine synthase (229 aa).

9–19 provides a ligand contact to ATP; sequence LSGGLDSATVL. The Zn(2+) site is built by Cys188, Cys198, Cys201, and Cys204.

It belongs to the QueC family. Requires Zn(2+) as cofactor.

It catalyses the reaction 7-carboxy-7-deazaguanine + NH4(+) + ATP = 7-cyano-7-deazaguanine + ADP + phosphate + H2O + H(+). The protein operates within purine metabolism; 7-cyano-7-deazaguanine biosynthesis. Catalyzes the ATP-dependent conversion of 7-carboxy-7-deazaguanine (CDG) to 7-cyano-7-deazaguanine (preQ(0)). This is 7-cyano-7-deazaguanine synthase from Methylobacillus flagellatus (strain ATCC 51484 / DSM 6875 / VKM B-1610 / KT).